A 330-amino-acid chain; its full sequence is uncharacterized protein (330 aa).

The ABC transporter domain maps to 4 to 242 (LTISDLVVEY…AGEVLFEQST (239 aa)). 40 to 47 (GPSGCGKT) is an ATP binding site. Residue 210-330 (DRVLELMPAQ…LIEHRELASE (121 aa)) participates in a nucleoside 3',5'-cyclic phosphate binding.

It belongs to the ABC transporter superfamily.

This is an uncharacterized protein from Mycobacterium bovis (strain ATCC BAA-935 / AF2122/97).